We begin with the raw amino-acid sequence, 264 residues long: TLC domain-containing protein 4-B (264 aa).

The next 6 membrane-spanning stretches (helical) occupy residues 6–26, 50–70, 84–104, 110–130, 169–189, and 210–230; these read VYVV…VSPV, LVST…LWYD, LVKL…LLLA, MGDV…GYVL, LVVA…IAVM, and LAIQ…NIIW. Positions 41 to 243 constitute a TLC domain; the sequence is NKLNDWNSRL…IARGCYKVIT (203 aa).

It belongs to the TLCD4 family.

The protein localises to the membrane. The sequence is that of TLC domain-containing protein 4-B (tlcd4b) from Danio rerio (Zebrafish).